The sequence spans 89 residues: Putative regulatory protein CLL_A1210 (89 aa).

This sequence belongs to the RemA family.

The sequence is that of Putative regulatory protein CLL_A1210 from Clostridium botulinum (strain Eklund 17B / Type B).